Here is a 276-residue protein sequence, read N- to C-terminus: Large ribosomal subunit protein uL2 (276 aa).

Disordered stretches follow at residues 29 to 54 and 224 to 276; these read PEKSLTKGLTKKAGRNNNGRVTSRRR and AMNP…RGQR. Residues 256 to 276 are compositionally biased toward basic residues; that stretch reads YKTRSKKKPSSKLIVKRRGQR.

Belongs to the universal ribosomal protein uL2 family. Part of the 50S ribosomal subunit. Forms a bridge to the 30S subunit in the 70S ribosome.

Functionally, one of the primary rRNA binding proteins. Required for association of the 30S and 50S subunits to form the 70S ribosome, for tRNA binding and peptide bond formation. It has been suggested to have peptidyltransferase activity; this is somewhat controversial. Makes several contacts with the 16S rRNA in the 70S ribosome. This chain is Large ribosomal subunit protein uL2, found in Maridesulfovibrio salexigens (strain ATCC 14822 / DSM 2638 / NCIMB 8403 / VKM B-1763) (Desulfovibrio salexigens).